Consider the following 570-residue polypeptide: Sulfite reductase [NADPH] hemoprotein beta-component (570 aa).

[4Fe-4S] cluster is bound by residues cysteine 434, cysteine 440, cysteine 479, and cysteine 483. Cysteine 483 is a siroheme binding site.

It belongs to the nitrite and sulfite reductase 4Fe-4S domain family. In terms of assembly, alpha(8)-beta(8). The alpha component is a flavoprotein, the beta component is a hemoprotein. The cofactor is siroheme. [4Fe-4S] cluster is required as a cofactor.

The enzyme catalyses hydrogen sulfide + 3 NADP(+) + 3 H2O = sulfite + 3 NADPH + 4 H(+). It functions in the pathway sulfur metabolism; hydrogen sulfide biosynthesis; hydrogen sulfide from sulfite (NADPH route): step 1/1. In terms of biological role, component of the sulfite reductase complex that catalyzes the 6-electron reduction of sulfite to sulfide. This is one of several activities required for the biosynthesis of L-cysteine from sulfate. This Escherichia coli O1:K1 / APEC protein is Sulfite reductase [NADPH] hemoprotein beta-component.